Here is an 87-residue protein sequence, read N- to C-terminus: Putative regulatory protein BCQ_3657 (87 aa).

Belongs to the RemA family.

The protein is Putative regulatory protein BCQ_3657 of Bacillus cereus (strain Q1).